Here is a 449-residue protein sequence, read N- to C-terminus: Glucose-6-phosphate isomerase 1 (449 aa).

Threonine 38 carries the post-translational modification Phosphothreonine. Glutamate 290 (proton donor) is an active-site residue. Active-site residues include histidine 311 and lysine 425.

Belongs to the GPI family. As to quaternary structure, homodimer.

Its subcellular location is the cytoplasm. It carries out the reaction alpha-D-glucose 6-phosphate = beta-D-fructose 6-phosphate. The protein operates within carbohydrate biosynthesis; gluconeogenesis. Its pathway is carbohydrate degradation; glycolysis; D-glyceraldehyde 3-phosphate and glycerone phosphate from D-glucose: step 2/4. Catalyzes the reversible isomerization of glucose-6-phosphate to fructose-6-phosphate. This Geobacillus stearothermophilus (Bacillus stearothermophilus) protein is Glucose-6-phosphate isomerase 1.